The following is a 118-amino-acid chain: NADPH-dependent 7-cyano-7-deazaguanine reductase (118 aa).

Residue Cys-31 is the Thioimide intermediate of the active site. The active-site Proton donor is Asp-38. Residues 53–55 (VEL) and 72–73 (YE) each bind substrate.

This sequence belongs to the GTP cyclohydrolase I family. QueF type 1 subfamily.

Its subcellular location is the cytoplasm. The catalysed reaction is 7-aminomethyl-7-carbaguanine + 2 NADP(+) = 7-cyano-7-deazaguanine + 2 NADPH + 3 H(+). It functions in the pathway tRNA modification; tRNA-queuosine biosynthesis. Catalyzes the NADPH-dependent reduction of 7-cyano-7-deazaguanine (preQ0) to 7-aminomethyl-7-deazaguanine (preQ1). This chain is NADPH-dependent 7-cyano-7-deazaguanine reductase, found in Chlorobium phaeobacteroides (strain BS1).